A 58-amino-acid polypeptide reads, in one-letter code: U8-ctenitoxin-Pk1a (58 aa).

5 disulfides stabilise this stretch: Cys2–Cys16, Cys9–Cys22, Cys15–Cys40, Cys24–Cys38, and Cys48–Cys55.

Expressed by the venom gland.

The protein localises to the secreted. No toxic effects on mice at dose levels of 5 ug per mouse. May be toxic to insects. The polypeptide is U8-ctenitoxin-Pk1a (Phoneutria keyserlingi (Brazilian wandering spider)).